A 320-amino-acid polypeptide reads, in one-letter code: Protein PXR1 (320 aa).

A compositionally biased stretch (basic residues) spans 1 to 11 (MGLAGPRKRTK). Residues 1–24 (MGLAGPRKRTKISHDPNNTAWSRS) form a disordered region. The segment covering 15 to 24 (DPNNTAWSRS) has biased composition (polar residues). In terms of domain architecture, G-patch spans 25–79 (TSGYGHKIMSAQGWTPGSFLGASNAAHADHFTAGSAGHIRVILKDDNLGLGAKLR). The segment at 152 to 298 (GEEVQTPQIS…MGRQFTRGRH (147 aa)) is disordered. Residues 169–182 (KRPKKARKKEKRRA) are compositionally biased toward basic residues. Composition is skewed to basic and acidic residues over residues 203-214 (RKENKEKKKSSD), 243-256 (KDPE…HDDS), and 269-288 (QESR…EHRP).

This sequence belongs to the PINX1 family.

The protein localises to the nucleus. It is found in the nucleolus. Functionally, involved in rRNA-processing at A0, A1 and A2 sites and negatively regulates telomerase. This Ajellomyces capsulatus (strain NAm1 / WU24) (Darling's disease fungus) protein is Protein PXR1 (PXR1).